Reading from the N-terminus, the 1136-residue chain is Probable phospholipid-transporting ATPase IIB (1136 aa).

Residues 1–145 are Cytoplasmic-facing; it reads MADQIPLYPV…IKNQKYNIFT (145 aa). Residues 146–166 traverse the membrane as a helical segment; the sequence is FIPGVLYEQFKFFLNLYFLIV. Residues 167 to 174 lie on the Extracellular side of the membrane; that stretch reads SCSQFVPA. Residues 175 to 195 form a helical membrane-spanning segment; the sequence is LKIGYLYTYWAPLGFVLAVTI. Topologically, residues 196-383 are cytoplasmic; the sequence is MREAVDEFRR…LDLELNQLTK (188 aa). The chain crosses the membrane as a helical span at residues 384-404; sequence ALFLALVALSVVMVTLQGFAG. Over 405–408 the chain is Extracellular; the sequence is PWYR. Residues 409-429 traverse the membrane as a helical segment; that stretch reads SLFRFLLLFSYIIPISLRVNL. At 430-939 the chain is on the cytoplasmic side; it reads DMGKAAYGWM…ALGQFVMHRG (510 aa). Residue Asp469 is the 4-aspartylphosphate intermediate of the active site. ATP is bound by residues Asp469, Lys470, and Thr471. Residue Asp469 participates in Mg(2+) binding. Thr471 provides a ligand contact to Mg(2+). A disordered region spans residues 514 to 538; it reads AGGSSAASTPPRKAPSSAPKVRRSV. The ATP site is built by Glu591, Phe633, Lys638, Lys657, Arg686, Thr687, Thr766, Gly767, Asp768, Arg848, and Lys854. Residue Asp874 coordinates Mg(2+). Asn877 and Asp878 together coordinate ATP. Position 878 (Asp878) interacts with Mg(2+). Residues 940-960 form a helical membrane-spanning segment; sequence LIISTMQAVFSSVFYFASVPL. Topologically, residues 961-962 are extracellular; that stretch reads YQ. A helical transmembrane segment spans residues 963 to 983; sequence GFLMVGYATVYTMFPVFSLVL. The Cytoplasmic segment spans residues 984-1012; it reads DQDVKPEMAMLYPELYKDLTKGRSLSFKT. Residues 1013–1033 form a helical membrane-spanning segment; sequence FLVWVLISIYQGGILMFGALV. Residues 1034-1041 lie on the Extracellular side of the membrane; the sequence is LFESEFVH. Residues 1042 to 1062 traverse the membrane as a helical segment; sequence VVAISFTALVLTELLMVALTV. Residues 1063-1066 lie on the Cytoplasmic side of the membrane; sequence RTWH. A helical transmembrane segment spans residues 1067–1087; it reads WLMVVAQLLSLGCYVASLAFL. Residues 1088 to 1098 lie on the Extracellular side of the membrane; that stretch reads NEYFDVAFITT. A helical transmembrane segment spans residues 1099-1119; it reads VTFVWKVSAITVVSCLPLYVL. At 1120-1136 the chain is on the cytoplasmic side; the sequence is KYLKRKLSPPSYSKLSS.

This sequence belongs to the cation transport ATPase (P-type) (TC 3.A.3) family. Type IV subfamily. The cofactor is Mg(2+).

The protein resides in the golgi apparatus. Its subcellular location is the trans-Golgi network membrane. The enzyme catalyses ATP + H2O + phospholipidSide 1 = ADP + phosphate + phospholipidSide 2.. The protein is Probable phospholipid-transporting ATPase IIB (ATP9B) of Bos taurus (Bovine).